Consider the following 83-residue polypeptide: uncharacterized protein (83 aa).

This is an uncharacterized protein from Escherichia phage Bf23 (Enterobacteria phage BF23).